Consider the following 337-residue polypeptide: Phosphoenolpyruvate transferase (337 aa).

Aspartate 69 is a binding site for 7,8-didemethyl-8-hydroxy-5-deazariboflavin.

This sequence belongs to the CofD family. As to quaternary structure, homodimer. It depends on Mg(2+) as a cofactor.

It catalyses the reaction enolpyruvoyl-2-diphospho-5'-guanosine + 7,8-didemethyl-8-hydroxy-5-deazariboflavin = dehydro coenzyme F420-0 + GMP + H(+). Its pathway is cofactor biosynthesis; coenzyme F420 biosynthesis. Its function is as follows. Catalyzes the transfer of the phosphoenolpyruvate moiety from enoylpyruvoyl-2-diphospho-5'-guanosine (EPPG) to 7,8-didemethyl-8-hydroxy-5-deazariboflavin (FO) with the formation of dehydro coenzyme F420-0 and GMP. This Mycobacterium avium (strain 104) protein is Phosphoenolpyruvate transferase.